A 450-amino-acid chain; its full sequence is MSNLKISDRFVKPFLDQSKLEKELERAEMARQTVLNGSGLGNEFLGWVNLPSQTKAEDLQNIRKAAELIQSHSQYLVVVGIGGSYLGARAVIEALTPEFSTPETQKKTVKILYAGHHLDADYHFRLLAFLENKEFSVNVISKSGTTTEPAIAFRLLLSLLERKYGKENIKHRVFATTDRSKGALKHLADEYKFPTFVIPDDVGGRYSVFTPVGLLPIAAAGFSINKLMDGAKQMESELKSTASKDGNLACFYAAIRNGLYSLGKTTEIFVSYNPSFGYVSEWWKQLFGESEGKNGKGIFPASVQFTTDLHSMGQYIQDGERKLMETVIKVEAPKQDVYLTEKTDDNDGLNYLAGKKLSEVNQSAMLGTLIAHKDGGVPCLEITLPSINEETLGELLYFYEFSCAVSGYMLGVNPFDQPGVEDYKNNMFALLGKKGYEKRKEEILSHLGFS.

The Proton donor role is filled by glutamate 289. Catalysis depends on residues histidine 310 and lysine 424.

This sequence belongs to the GPI family.

The protein localises to the cytoplasm. It carries out the reaction alpha-D-glucose 6-phosphate = beta-D-fructose 6-phosphate. Its pathway is carbohydrate biosynthesis; gluconeogenesis. It participates in carbohydrate degradation; glycolysis; D-glyceraldehyde 3-phosphate and glycerone phosphate from D-glucose: step 2/4. In terms of biological role, catalyzes the reversible isomerization of glucose-6-phosphate to fructose-6-phosphate. This Leptospira biflexa serovar Patoc (strain Patoc 1 / Ames) protein is Glucose-6-phosphate isomerase.